The chain runs to 354 residues: Homeobox-leucine zipper protein HOX27 (354 aa).

Residues 98–175 (SVAAGAPGME…DDEGASARKK (78 aa)) are disordered. The segment covering 148 to 157 (QGGGGGGGGE) has biased composition (gly residues). Positions 171-230 (SARKKLRLSKEQSAFLEESFKEHSTLNPKQKVALAKQLNLRPRQVEVWFQNRRARTKLKQ) form a DNA-binding region, homeobox. The segment at 229 to 273 (KQTEVDCEYLKRCCETLTEENRRLHKELAELRALKTARPFYMHLP) is leucine-zipper. The tract at residues 294-323 (STSAPAAATSPAAAPTAAARTAVASPEPHR) is disordered.

The protein belongs to the HD-ZIP homeobox family. Class II subfamily. Expressed in seedlings, roots, stems, leaf sheaths and blades and panicles.

The protein localises to the nucleus. Functionally, probable transcription factor. The polypeptide is Homeobox-leucine zipper protein HOX27 (HOX27) (Oryza sativa subsp. japonica (Rice)).